The primary structure comprises 151 residues: Large ribosomal subunit protein bL9 (151 aa).

Belongs to the bacterial ribosomal protein bL9 family.

Its function is as follows. Binds to the 23S rRNA. The sequence is that of Large ribosomal subunit protein bL9 from Chloroherpeton thalassium (strain ATCC 35110 / GB-78).